Here is a 499-residue protein sequence, read N- to C-terminus: Pyruvate kinase 2 (499 aa).

A substrate-binding site is contributed by Arg-50. Asn-52, Ser-54, Asp-84, and Thr-85 together coordinate K(+). 52-55 (NFSH) is an ATP binding site. Arg-91 contacts ATP. Glu-241 is a Mg(2+) binding site. Substrate contacts are provided by Gly-264, Asp-265, and Thr-297. Asp-265 is a binding site for Mg(2+).

The protein belongs to the pyruvate kinase family. In terms of assembly, homotetramer. Mg(2+) serves as cofactor. The cofactor is K(+).

It catalyses the reaction pyruvate + ATP = phosphoenolpyruvate + ADP + H(+). It functions in the pathway carbohydrate degradation; glycolysis; pyruvate from D-glyceraldehyde 3-phosphate: step 5/5. Its activity is regulated as follows. Activated by fructose 2,6-bisphosphate, activated by the effector in a cooperative manner. The polypeptide is Pyruvate kinase 2 (PYK2) (Trypanosoma brucei brucei).